The following is a 45-amino-acid chain: Bacteriocin fulvocin-C (45 aa).

In terms of biological role, bacteriocin. The protein is Bacteriocin fulvocin-C of Myxococcus fulvus.